The following is a 615-amino-acid chain: Sorting nexin-41 (615 aa).

The interval 1-71 (MWNDEDNNPY…DEGDYVGQAN (71 aa)) is disordered. A compositionally biased stretch (low complexity) spans 42–53 (SHSSNPDISDFS). Residues 93 to 210 (PDMPILITDA…RFLDPNVSWS (118 aa)) form the PX domain. Positions 127, 129, 153, and 176 each coordinate a 1,2-diacyl-sn-glycero-3-phospho-(1D-myo-inositol-3-phosphate). 2 disordered regions span residues 218–277 (ASSV…RFPP) and 432–504 (QYLN…RKTS). Polar residues-rich tracts occupy residues 252-263 (LKSTSGTSSSPN) and 434-446 (LNRT…TKQR). Over residues 447–456 (SLSTSSATSS) the composition is skewed to low complexity.

The protein belongs to the sorting nexin family.

It localises to the endosome membrane. The protein localises to the endomembrane system. May be required for cytoplasm to vacuole transport (Cvt) and pexophagy. This chain is Sorting nexin-41 (snx41), found in Emericella nidulans (strain FGSC A4 / ATCC 38163 / CBS 112.46 / NRRL 194 / M139) (Aspergillus nidulans).